Here is a 159-residue protein sequence, read N- to C-terminus: 18.0 kDa class I heat shock protein (159 aa).

The region spanning 45–159 is the sHSP domain; that stretch reads ETAAFANTHI…PEVKSIHISG (115 aa).

It belongs to the small heat shock protein (HSP20) family. In terms of assembly, forms oligomeric structures.

It is found in the cytoplasm. The polypeptide is 18.0 kDa class I heat shock protein (Daucus carota (Wild carrot)).